The following is a 410-amino-acid chain: MKIYLVGGAVRDALLEQPAGDRDWVVVGADQAQMEAQGFKPVGKDFPVFLHPRSGEEYALARTERKSGRGYRGFVVDADPSVTLEEDLLRRDFTINAIARDEETGELFDPYNGARDLQARVLRHVGPAFVEDPVRVLRAARFMARLAPLGFTLAADTAALMREMAASGELDSLVPERVWQELRRALSCAQPSAFLRTLHDADALRVILPEVDALYGVPQRAEFHPEVDTGIHQEMVSDMAARLAPGDALVGFAALTHDLGKALTPPEEWPRHVMHEQRGVAPLQALCERLKVPQDFRQLAIIACREHLNVHRLAELRDRTLHELLVRCDAFRRPERIAQLALVCEADKRGRLGSEEAAYPQGEALKRLHAAALAINARDLAAEGLQGPQIGEALTKARIAAIAAARRIGA.

Residues Gly8 and Arg11 each coordinate ATP. Residues Gly8 and Arg11 each contribute to the CTP site. Residues Asp21 and Asp23 each coordinate Mg(2+). The ATP site is built by Arg91, Arg138, and Arg141. Positions 91, 138, and 141 each coordinate CTP. In terms of domain architecture, HD spans 229 to 347 (TGIHQEMVSD…AQLALVCEAD (119 aa)).

The protein belongs to the tRNA nucleotidyltransferase/poly(A) polymerase family. Bacterial CCA-adding enzyme type 1 subfamily. Monomer. Can also form homodimers and oligomers. It depends on Mg(2+) as a cofactor. Requires Ni(2+) as cofactor.

It catalyses the reaction a tRNA precursor + 2 CTP + ATP = a tRNA with a 3' CCA end + 3 diphosphate. It carries out the reaction a tRNA with a 3' CCA end + 2 CTP + ATP = a tRNA with a 3' CCACCA end + 3 diphosphate. Its function is as follows. Catalyzes the addition and repair of the essential 3'-terminal CCA sequence in tRNAs without using a nucleic acid template. Adds these three nucleotides in the order of C, C, and A to the tRNA nucleotide-73, using CTP and ATP as substrates and producing inorganic pyrophosphate. tRNA 3'-terminal CCA addition is required both for tRNA processing and repair. Also involved in tRNA surveillance by mediating tandem CCA addition to generate a CCACCA at the 3' terminus of unstable tRNAs. While stable tRNAs receive only 3'-terminal CCA, unstable tRNAs are marked with CCACCA and rapidly degraded. The protein is Multifunctional CCA protein of Xanthomonas euvesicatoria pv. vesicatoria (strain 85-10) (Xanthomonas campestris pv. vesicatoria).